Reading from the N-terminus, the 38-residue chain is Cytochrome b6-f complex subunit 5 (38 aa).

A helical membrane pass occupies residues 5–25; it reads LVLGLVMGLVPITLAGLFVAA.

Belongs to the PetG family. The 4 large subunits of the cytochrome b6-f complex are cytochrome b6, subunit IV (17 kDa polypeptide, PetD), cytochrome f and the Rieske protein, while the 4 small subunits are PetG, PetL, PetM and PetN. The complex functions as a dimer.

It is found in the cellular thylakoid membrane. Its function is as follows. Component of the cytochrome b6-f complex, which mediates electron transfer between photosystem II (PSII) and photosystem I (PSI), cyclic electron flow around PSI, and state transitions. PetG is required for either the stability or assembly of the cytochrome b6-f complex. The chain is Cytochrome b6-f complex subunit 5 from Gloeothece citriformis (strain PCC 7424) (Cyanothece sp. (strain PCC 7424)).